We begin with the raw amino-acid sequence, 139 residues long: MLIPRRVKHRKQHHPGRSGQATGGTKVSFGEFGIQALTPAYVTNRQIESARIAMTRHIKRGGKVWINIYPDRPLTKKPAETRMGSGKGSPEWWVANVKPGRVLFEVSGVSEDLAREAMSRAIHKLPLKARIIKREEGDA.

Positions 1 to 16 are enriched in basic residues; that stretch reads MLIPRRVKHRKQHHPG. The segment at 1-25 is disordered; sequence MLIPRRVKHRKQHHPGRSGQATGGT.

The protein belongs to the universal ribosomal protein uL16 family. Part of the 50S ribosomal subunit.

Its function is as follows. Binds 23S rRNA and is also seen to make contacts with the A and possibly P site tRNAs. The sequence is that of Large ribosomal subunit protein uL16 from Leifsonia xyli subsp. xyli (strain CTCB07).